A 212-amino-acid chain; its full sequence is Large ribosomal subunit protein uL3 (212 aa).

Positions 135 to 155 are enriched in polar residues; the sequence is ATHGNSVSHRAHGSTGQNQSP. Positions 135–162 are disordered; the sequence is ATHGNSVSHRAHGSTGQNQSPGKVFKGK. Gln-153 is subject to N5-methylglutamine.

This sequence belongs to the universal ribosomal protein uL3 family. As to quaternary structure, part of the 50S ribosomal subunit. Forms a cluster with proteins L14 and L19. Post-translationally, methylated by PrmB.

Functionally, one of the primary rRNA binding proteins, it binds directly near the 3'-end of the 23S rRNA, where it nucleates assembly of the 50S subunit. This chain is Large ribosomal subunit protein uL3, found in Psychrobacter arcticus (strain DSM 17307 / VKM B-2377 / 273-4).